The sequence spans 509 residues: MSSHIQIFDTTLRDGEQTPGVNFTFDERLRIALQLEKWGVDVIEAGFPASSTGSFKSVQAIAQTLTTTAVCGLARCKKSDIDAVYEATKDAAKPVVHVFIATSPIHLEHKLKMSQEDVLASIKEHVTYAKQLFDVVQFSPEDATRTELPFLVKCVQTAVDAGATVINIPDTVGYSYHDEYAHIFKTLTESVTSSNEIIYSAHCHDDLGMAVSNSLAAIEGGARRIEGTVNGIGERAGNAALEEVALALYVRNDHYGAQTALNLEETKKTSDLISRYAGIRVPRNKAIVGQNAFSHESGIHQDGVLKHRETYEIMTPQLVGVSTTELPLGKLSGKHAFSEKLKALGYNIDKEAQIDLFKQFKTIADKKKSVSDRDIHAIIQGSEHEHQALYKLETLQLQYVSSGLQSAVVVVKDKEGHIYQDSSIGTGSIVAIYNAVDRIFQKETELIDYRINSVTEGTDAQAEVHVNLLIEGKTVNGFGIDHDILQASCKAYVEAHAKFAAENVEKVGN.

One can recognise a Pyruvate carboxyltransferase domain in the interval 5 to 267 (IQIFDTTLRD…QTALNLEETK (263 aa)). Mn(2+)-binding residues include aspartate 14, histidine 202, histidine 204, and asparagine 238. The interval 391–509 (KLETLQLQYV…AAENVEKVGN (119 aa)) is regulatory domain.

The protein belongs to the alpha-IPM synthase/homocitrate synthase family. LeuA type 1 subfamily. As to quaternary structure, homodimer. Mn(2+) is required as a cofactor.

The protein localises to the cytoplasm. It carries out the reaction 3-methyl-2-oxobutanoate + acetyl-CoA + H2O = (2S)-2-isopropylmalate + CoA + H(+). It participates in amino-acid biosynthesis; L-leucine biosynthesis; L-leucine from 3-methyl-2-oxobutanoate: step 1/4. Catalyzes the condensation of the acetyl group of acetyl-CoA with 3-methyl-2-oxobutanoate (2-ketoisovalerate) to form 3-carboxy-3-hydroxy-4-methylpentanoate (2-isopropylmalate). This is 2-isopropylmalate synthase from Staphylococcus aureus (strain Mu3 / ATCC 700698).